Consider the following 56-residue polypeptide: UPF0391 membrane protein HCH_04387 (56 aa).

The next 2 membrane-spanning stretches (helical) occupy residues 6–26 and 30–50; these read IVFF…IAAA and IAQI…IAGG.

This sequence belongs to the UPF0391 family.

The protein resides in the cell membrane. In Hahella chejuensis (strain KCTC 2396), this protein is UPF0391 membrane protein HCH_04387.